The sequence spans 79 residues: ATP synthase subunit c (79 aa).

The next 2 membrane-spanning stretches (helical) occupy residues 11–31 and 53–73; these read MAAA…IGIL and FFIV…LGLY.

Belongs to the ATPase C chain family. As to quaternary structure, F-type ATPases have 2 components, F(1) - the catalytic core - and F(0) - the membrane proton channel. F(1) has five subunits: alpha(3), beta(3), gamma(1), delta(1), epsilon(1). F(0) has three main subunits: a(1), b(2) and c(10-14). The alpha and beta chains form an alternating ring which encloses part of the gamma chain. F(1) is attached to F(0) by a central stalk formed by the gamma and epsilon chains, while a peripheral stalk is formed by the delta and b chains.

The protein localises to the cell inner membrane. F(1)F(0) ATP synthase produces ATP from ADP in the presence of a proton or sodium gradient. F-type ATPases consist of two structural domains, F(1) containing the extramembraneous catalytic core and F(0) containing the membrane proton channel, linked together by a central stalk and a peripheral stalk. During catalysis, ATP synthesis in the catalytic domain of F(1) is coupled via a rotary mechanism of the central stalk subunits to proton translocation. In terms of biological role, key component of the F(0) channel; it plays a direct role in translocation across the membrane. A homomeric c-ring of between 10-14 subunits forms the central stalk rotor element with the F(1) delta and epsilon subunits. This chain is ATP synthase subunit c, found in Serratia proteamaculans (strain 568).